The sequence spans 231 residues: Large ribosomal subunit protein uL1 (231 aa).

The protein belongs to the universal ribosomal protein uL1 family. As to quaternary structure, part of the 50S ribosomal subunit.

Its function is as follows. Binds directly to 23S rRNA. The L1 stalk is quite mobile in the ribosome, and is involved in E site tRNA release. In terms of biological role, protein L1 is also a translational repressor protein, it controls the translation of the L11 operon by binding to its mRNA. The sequence is that of Large ribosomal subunit protein uL1 from Ralstonia pickettii (strain 12J).